The following is a 190-amino-acid chain: Tegument antigen (190 aa).

EF-hand domains follow at residues 8 to 43 (SQMEEFIRAFLEIDADSNEMIDKQELIKYCQKYRLD) and 51 to 77 (IARFDTDKDNKISIEEFCRGFGLKVSE). Aspartate 55, aspartate 57, aspartate 59, lysine 61, and glutamate 66 together coordinate Ca(2+).

As to expression, adult and schistosomula tegument.

This is Tegument antigen from Schistosoma mansoni (Blood fluke).